The sequence spans 274 residues: Undecaprenyl-diphosphatase (274 aa).

Transmembrane regions (helical) follow at residues 4 to 24, 41 to 61, 83 to 103, 108 to 128, 184 to 204, 218 to 238, and 246 to 266; these read PLFV…FLPI, DATS…AVCW, FVGL…MFHS, LLFN…LILW, AAEF…VYDL, VFAI…KAFI, and FIAF…TWQL.

This sequence belongs to the UppP family.

It is found in the cell inner membrane. It catalyses the reaction di-trans,octa-cis-undecaprenyl diphosphate + H2O = di-trans,octa-cis-undecaprenyl phosphate + phosphate + H(+). Catalyzes the dephosphorylation of undecaprenyl diphosphate (UPP). Confers resistance to bacitracin. This is Undecaprenyl-diphosphatase from Aromatoleum aromaticum (strain DSM 19018 / LMG 30748 / EbN1) (Azoarcus sp. (strain EbN1)).